Consider the following 127-residue polypeptide: Fatty acid-binding protein, liver (127 aa).

N-acetylmethionine is present on methionine 1. Lysine 31 and lysine 36 each carry N6-succinyllysine. Serine 39 is modified (phosphoserine). Lysine 46 bears the N6-succinyllysine mark. Serine 56 is subject to Phosphoserine. Lysine 57, lysine 78, and lysine 90 each carry N6-succinyllysine. Serine 100 is modified (phosphoserine). Asparagine 105 is subject to Deamidated asparagine; alternate. A cross-link (isoaspartyl glycine isopeptide (Asn-Gly); alternate) is located at residues 105-106 (NG). An N6-succinyllysine modification is found at lysine 121.

This sequence belongs to the calycin superfamily. Fatty-acid binding protein (FABP) family. In terms of assembly, monomer. Post-translationally, deamidation and transpeptidation at the beta carboxyl of Asn-105 forms an isoaspartyl residue and Edman degradation appears as though blocked. This rearrangement gives rise to an extra negative charge carried by the acid form.

Its subcellular location is the cytoplasm. Its function is as follows. Plays a role in lipoprotein-mediated cholesterol uptake in hepatocytes. Binds cholesterol. Binds free fatty acids and their coenzyme A derivatives, bilirubin, and some other small molecules in the cytoplasm. May be involved in intracellular lipid transport. This is Fatty acid-binding protein, liver (FABP1) from Bos taurus (Bovine).